The primary structure comprises 321 residues: Altered inheritance of mitochondria protein 18, mitochondrial (321 aa).

The N-terminal 72 residues, 1–72, are a transit peptide targeting the mitochondrion; sequence MDRGRCANML…LLATSLYYRD (72 aa).

This sequence belongs to the AIM18/AIM46 family.

The protein resides in the mitochondrion. In Saccharomyces cerevisiae (strain AWRI1631) (Baker's yeast), this protein is Altered inheritance of mitochondria protein 18, mitochondrial (AIM18).